The chain runs to 463 residues: L-cystine uptake protein TcyP (463 aa).

A run of 10 helical transmembrane segments spans residues Thr-3–Met-23, Val-34–Pro-54, Tyr-73–Phe-93, Ile-105–Ile-125, Pro-184–Val-204, Ile-225–Met-245, Met-262–Leu-282, Leu-338–Ala-358, Val-369–Gly-389, and Phe-394–Ile-414.

It belongs to the dicarboxylate/amino acid:cation symporter (DAACS) (TC 2.A.23) family.

The protein resides in the cell membrane. Functionally, mediates uptake of L-cystine, the oxidized form of L-cysteine. Although it is more specific for L-cystine, it could also transport a much broader range of amino acids and sulfur compounds including S-methylcysteine. In Bacillus subtilis (strain 168), this protein is L-cystine uptake protein TcyP (tcyP).